A 303-amino-acid chain; its full sequence is tRNA dimethylallyltransferase (303 aa).

9-16 (GPTAVGKT) contacts ATP. Position 11-16 (11-16 (TAVGKT)) interacts with substrate. Residues 34–37 (DSRQ) are interaction with substrate tRNA.

Belongs to the IPP transferase family. As to quaternary structure, monomer. Requires Mg(2+) as cofactor.

The catalysed reaction is adenosine(37) in tRNA + dimethylallyl diphosphate = N(6)-dimethylallyladenosine(37) in tRNA + diphosphate. Functionally, catalyzes the transfer of a dimethylallyl group onto the adenine at position 37 in tRNAs that read codons beginning with uridine, leading to the formation of N6-(dimethylallyl)adenosine (i(6)A). The protein is tRNA dimethylallyltransferase of Petrotoga mobilis (strain DSM 10674 / SJ95).